The following is a 324-amino-acid chain: tRNA dimethylallyltransferase (324 aa).

17 to 24 (GPTASGKT) contributes to the ATP binding site. Residue 19–24 (TASGKT) coordinates substrate. Interaction with substrate tRNA regions lie at residues 42-45 (DSAL), 166-170 (QRIQR), and 251-256 (RCVGYR).

The protein belongs to the IPP transferase family. As to quaternary structure, monomer. Mg(2+) is required as a cofactor.

It carries out the reaction adenosine(37) in tRNA + dimethylallyl diphosphate = N(6)-dimethylallyladenosine(37) in tRNA + diphosphate. In terms of biological role, catalyzes the transfer of a dimethylallyl group onto the adenine at position 37 in tRNAs that read codons beginning with uridine, leading to the formation of N6-(dimethylallyl)adenosine (i(6)A). In Burkholderia thailandensis (strain ATCC 700388 / DSM 13276 / CCUG 48851 / CIP 106301 / E264), this protein is tRNA dimethylallyltransferase.